The chain runs to 205 residues: dITP/XTP pyrophosphatase (205 aa).

7–12 (SNNRGK) serves as a coordination point for substrate. Mg(2+) is bound by residues Glu-39 and Asp-68. Asp-68 serves as the catalytic Proton acceptor. Substrate contacts are provided by residues Ala-69, 154–157 (FGFD), Lys-177, and 182–183 (HR).

It belongs to the HAM1 NTPase family. As to quaternary structure, homodimer. It depends on Mg(2+) as a cofactor.

It catalyses the reaction XTP + H2O = XMP + diphosphate + H(+). It carries out the reaction dITP + H2O = dIMP + diphosphate + H(+). The enzyme catalyses ITP + H2O = IMP + diphosphate + H(+). Functionally, pyrophosphatase that catalyzes the hydrolysis of nucleoside triphosphates to their monophosphate derivatives, with a high preference for the non-canonical purine nucleotides XTP (xanthosine triphosphate), dITP (deoxyinosine triphosphate) and ITP. Seems to function as a house-cleaning enzyme that removes non-canonical purine nucleotides from the nucleotide pool, thus preventing their incorporation into DNA/RNA and avoiding chromosomal lesions. The polypeptide is dITP/XTP pyrophosphatase (Acidovorax ebreus (strain TPSY) (Diaphorobacter sp. (strain TPSY))).